Consider the following 494-residue polypeptide: Aspartyl/glutamyl-tRNA(Asn/Gln) amidotransferase subunit B (494 aa).

Residues 475 to 494 (TSGRADPKATNQMLAKKLKG) form a disordered region.

The protein belongs to the GatB/GatE family. GatB subfamily. In terms of assembly, heterotrimer of A, B and C subunits.

The catalysed reaction is L-glutamyl-tRNA(Gln) + L-glutamine + ATP + H2O = L-glutaminyl-tRNA(Gln) + L-glutamate + ADP + phosphate + H(+). It carries out the reaction L-aspartyl-tRNA(Asn) + L-glutamine + ATP + H2O = L-asparaginyl-tRNA(Asn) + L-glutamate + ADP + phosphate + 2 H(+). Its function is as follows. Allows the formation of correctly charged Asn-tRNA(Asn) or Gln-tRNA(Gln) through the transamidation of misacylated Asp-tRNA(Asn) or Glu-tRNA(Gln) in organisms which lack either or both of asparaginyl-tRNA or glutaminyl-tRNA synthetases. The reaction takes place in the presence of glutamine and ATP through an activated phospho-Asp-tRNA(Asn) or phospho-Glu-tRNA(Gln). This Acaryochloris marina (strain MBIC 11017) protein is Aspartyl/glutamyl-tRNA(Asn/Gln) amidotransferase subunit B.